The following is a 358-amino-acid chain: Mesaconyl-CoA hydratase (358 aa).

Belongs to the enoyl-CoA hydratase/isomerase family. Homodimer.

The catalysed reaction is (2R,3S)-beta-methylmalyl-CoA = 2-methylfumaryl-CoA + H2O. Shows highest activity at 0.5 M KCl. Does not require divalent ions for activity. Its function is as follows. Involved in the methylaspartate cycle. Catalyzes the reversible hydration of mesaconyl-CoA (2-methylfumaryl-CoA) to yield beta-methylmalyl-CoA ((2R,3S)-beta-methylmalyl-CoA). Also shows activity with mesaconyl-C4-CoA (3-methylfumaryl-CoA), (S)-citramalyl-CoA and (S)-malyl-CoA. The sequence is that of Mesaconyl-CoA hydratase from Haloarcula hispanica (strain ATCC 33960 / DSM 4426 / JCM 8911 / NBRC 102182 / NCIMB 2187 / VKM B-1755).